Consider the following 956-residue polypeptide: Zinc protease PQQL-like (956 aa).

Met-1 bears the N-acetylmethionine mark. Residue His-85 participates in Zn(2+) binding. The Proton acceptor role is filled by Glu-88. Residue His-89 participates in Zn(2+) binding. Glu-165 is an active-site residue. Glu-172 is a binding site for Zn(2+).

It belongs to the peptidase M16 family. The cofactor is Zn(2+).

This chain is Zinc protease PQQL-like, found in Arabidopsis thaliana (Mouse-ear cress).